Here is a 293-residue protein sequence, read N- to C-terminus: Ribosomal RNA small subunit methyltransferase A (293 aa).

Residues Asn-29, Leu-31, Gly-56, Glu-77, Asp-102, and Asn-127 each coordinate S-adenosyl-L-methionine.

This sequence belongs to the class I-like SAM-binding methyltransferase superfamily. rRNA adenine N(6)-methyltransferase family. RsmA subfamily.

It localises to the cytoplasm. The catalysed reaction is adenosine(1518)/adenosine(1519) in 16S rRNA + 4 S-adenosyl-L-methionine = N(6)-dimethyladenosine(1518)/N(6)-dimethyladenosine(1519) in 16S rRNA + 4 S-adenosyl-L-homocysteine + 4 H(+). Its function is as follows. Specifically dimethylates two adjacent adenosines (A1518 and A1519) in the loop of a conserved hairpin near the 3'-end of 16S rRNA in the 30S particle. May play a critical role in biogenesis of 30S subunits. The polypeptide is Ribosomal RNA small subunit methyltransferase A (Lysinibacillus sphaericus (strain C3-41)).